The sequence spans 417 residues: Secernin-3 (417 aa).

A propeptide spanning residues Met1–Ser5 is cleaved from the precursor. Cys6 is an active-site residue. Cys6 is subject to Glyoxylic acid (Cys); alternate. A Pyruvic acid (Cys); alternate modification is found at Cys6.

The protein belongs to the peptidase C69 family. Secernin subfamily.

In terms of biological role, plays a role in thermal nociception. The sequence is that of Secernin-3 (scrn3) from Danio rerio (Zebrafish).